A 366-amino-acid polypeptide reads, in one-letter code: Pectinesterase A (366 aa).

The N-terminal stretch at 1 to 24 (MLKTISGTLALSLIIAASVHQAQA) is a signal peptide. 2 residues coordinate substrate: Thr109 and Gln153. Asp178 functions as the Proton donor in the catalytic mechanism. Cys192 and Cys212 are disulfide-bonded. The Nucleophile role is filled by Asp199. Residues Arg219, Asn226, Tyr230, Arg267, Trp269, and Thr272 each contribute to the substrate site.

The protein belongs to the pectinesterase family. As to quaternary structure, monomer.

It is found in the secreted. The enzyme catalyses [(1-&gt;4)-alpha-D-galacturonosyl methyl ester](n) + n H2O = [(1-&gt;4)-alpha-D-galacturonosyl](n) + n methanol + n H(+). The protein operates within glycan metabolism; pectin degradation; 2-dehydro-3-deoxy-D-gluconate from pectin: step 1/5. Its function is as follows. Catalyzes the first step in maceration and soft-rotting of plant tissue. The polypeptide is Pectinesterase A (Dickeya dadantii (strain 3937) (Erwinia chrysanthemi (strain 3937))).